Consider the following 444-residue polypeptide: Homocysteine/cysteine synthase (444 aa).

Ser44 is subject to Phosphoserine. Lys160 is covalently cross-linked (Glycyl lysine isopeptide (Lys-Gly) (interchain with G-Cter in ubiquitin)). N6-(pyridoxal phosphate)lysine is present on Lys209.

The protein belongs to the trans-sulfuration enzymes family. Homotetramer. It depends on pyridoxal 5'-phosphate as a cofactor.

It is found in the cytoplasm. The catalysed reaction is O-acetyl-L-homoserine + methanethiol = L-methionine + acetate + H(+). It catalyses the reaction O-acetyl-L-homoserine + hydrogen sulfide = L-homocysteine + acetate. It carries out the reaction O-acetyl-L-serine + hydrogen sulfide = L-cysteine + acetate. It participates in amino-acid biosynthesis; L-methionine biosynthesis via de novo pathway; L-homocysteine from O-acetyl-L-homoserine. Its function is as follows. Catalyzes the conversion of O-acetyl-L-homoserine (OAH) into homocysteine in the methionine biosynthesis pathway. Required to efficiently reduce toxic levels of hydrogen sulfide generated when the sulfate assimilation pathway (SAP) is active. Also catalyzes the conversion of O-acetylserine (OAS) into cysteine, the last step in the cysteine biosynthesis pathway. However, it seems that in S.cerevisiae cysteine biosynthesis occurs exclusively through the cystathionine pathway and not via direct incorporation of sulfur into OAS. It therefore has no metabolic role in cysteine biosynthesis and may only have a regulatory role controlling OAS levels. The polypeptide is Homocysteine/cysteine synthase (Saccharomyces cerevisiae (strain ATCC 204508 / S288c) (Baker's yeast)).